We begin with the raw amino-acid sequence, 217 residues long: Small ribosomal subunit protein uS3 (217 aa).

Residues 38–106 (IRKFIQKELA…QVHINIVEIK (69 aa)) form the KH type-2 domain.

The protein belongs to the universal ribosomal protein uS3 family. In terms of assembly, part of the 30S ribosomal subunit. Forms a tight complex with proteins S10 and S14.

In terms of biological role, binds the lower part of the 30S subunit head. Binds mRNA in the 70S ribosome, positioning it for translation. The chain is Small ribosomal subunit protein uS3 from Streptococcus thermophilus (strain CNRZ 1066).